The chain runs to 173 residues: Small ribosomal subunit protein uS5 (173 aa).

The S5 DRBM domain maps to 16–79 (LSELLVSVRR…NAAKKNMIRV (64 aa)).

It belongs to the universal ribosomal protein uS5 family. Part of the 30S ribosomal subunit. Contacts proteins S4 and S8.

Its function is as follows. With S4 and S12 plays an important role in translational accuracy. In terms of biological role, located at the back of the 30S subunit body where it stabilizes the conformation of the head with respect to the body. The polypeptide is Small ribosomal subunit protein uS5 (Anaplasma phagocytophilum (strain HZ)).